Consider the following 273-residue polypeptide: Putative pyruvate, phosphate dikinase regulatory protein (273 aa).

153–160 (GVSRTSKT) lines the ADP pocket.

This sequence belongs to the pyruvate, phosphate/water dikinase regulatory protein family. PDRP subfamily.

It carries out the reaction N(tele)-phospho-L-histidyl/L-threonyl-[pyruvate, phosphate dikinase] + ADP = N(tele)-phospho-L-histidyl/O-phospho-L-threonyl-[pyruvate, phosphate dikinase] + AMP + H(+). The catalysed reaction is N(tele)-phospho-L-histidyl/O-phospho-L-threonyl-[pyruvate, phosphate dikinase] + phosphate + H(+) = N(tele)-phospho-L-histidyl/L-threonyl-[pyruvate, phosphate dikinase] + diphosphate. Its function is as follows. Bifunctional serine/threonine kinase and phosphorylase involved in the regulation of the pyruvate, phosphate dikinase (PPDK) by catalyzing its phosphorylation/dephosphorylation. This Sinorhizobium medicae (strain WSM419) (Ensifer medicae) protein is Putative pyruvate, phosphate dikinase regulatory protein.